The following is a 319-amino-acid chain: Cytochrome f (319 aa).

A signal peptide spans 1–35 (METRNIFSWIKEQITRSISVSLMIYIITRTAVSNA). Positions 36, 56, 59, and 60 each coordinate heme. Residues 285–305 (VQGLLFFLASVILAQIFLVLK) form a helical membrane-spanning segment.

It belongs to the cytochrome f family. In terms of assembly, the 4 large subunits of the cytochrome b6-f complex are cytochrome b6, subunit IV (17 kDa polypeptide, petD), cytochrome f and the Rieske protein, while the 4 small subunits are PetG, PetL, PetM and PetN. The complex functions as a dimer. It depends on heme as a cofactor.

The protein resides in the plastid. It localises to the chloroplast thylakoid membrane. Its function is as follows. Component of the cytochrome b6-f complex, which mediates electron transfer between photosystem II (PSII) and photosystem I (PSI), cyclic electron flow around PSI, and state transitions. This is Cytochrome f from Coffea arabica (Arabian coffee).